Consider the following 334-residue polypeptide: Holliday junction branch migration complex subunit RuvB (334 aa).

A large ATPase domain (RuvB-L) region spans residues 1–182 (MDERLVSSEA…FGVLSRLEYY (182 aa)). Residues L21, R22, G63, K66, T67, T68, 129–131 (EDF), R172, Y182, and R219 each bind ATP. T67 serves as a coordination point for Mg(2+). The tract at residues 183–253 (TQEELTDIVS…IAHDALERLQ (71 aa)) is small ATPAse domain (RuvB-S). The segment at 256–334 (ALGLDHIDHK…HFRLEAPARD (79 aa)) is head domain (RuvB-H). DNA-binding residues include R311 and R316.

The protein belongs to the RuvB family. As to quaternary structure, homohexamer. Forms an RuvA(8)-RuvB(12)-Holliday junction (HJ) complex. HJ DNA is sandwiched between 2 RuvA tetramers; dsDNA enters through RuvA and exits via RuvB. An RuvB hexamer assembles on each DNA strand where it exits the tetramer. Each RuvB hexamer is contacted by two RuvA subunits (via domain III) on 2 adjacent RuvB subunits; this complex drives branch migration. In the full resolvosome a probable DNA-RuvA(4)-RuvB(12)-RuvC(2) complex forms which resolves the HJ.

The protein resides in the cytoplasm. The enzyme catalyses ATP + H2O = ADP + phosphate + H(+). Functionally, the RuvA-RuvB-RuvC complex processes Holliday junction (HJ) DNA during genetic recombination and DNA repair, while the RuvA-RuvB complex plays an important role in the rescue of blocked DNA replication forks via replication fork reversal (RFR). RuvA specifically binds to HJ cruciform DNA, conferring on it an open structure. The RuvB hexamer acts as an ATP-dependent pump, pulling dsDNA into and through the RuvAB complex. RuvB forms 2 homohexamers on either side of HJ DNA bound by 1 or 2 RuvA tetramers; 4 subunits per hexamer contact DNA at a time. Coordinated motions by a converter formed by DNA-disengaged RuvB subunits stimulates ATP hydrolysis and nucleotide exchange. Immobilization of the converter enables RuvB to convert the ATP-contained energy into a lever motion, pulling 2 nucleotides of DNA out of the RuvA tetramer per ATP hydrolyzed, thus driving DNA branch migration. The RuvB motors rotate together with the DNA substrate, which together with the progressing nucleotide cycle form the mechanistic basis for DNA recombination by continuous HJ branch migration. Branch migration allows RuvC to scan DNA until it finds its consensus sequence, where it cleaves and resolves cruciform DNA. In Bacillus velezensis (strain DSM 23117 / BGSC 10A6 / LMG 26770 / FZB42) (Bacillus amyloliquefaciens subsp. plantarum), this protein is Holliday junction branch migration complex subunit RuvB.